Here is a 197-residue protein sequence, read N- to C-terminus: Probable nicotinate-nucleotide adenylyltransferase (197 aa).

It belongs to the NadD family.

The enzyme catalyses nicotinate beta-D-ribonucleotide + ATP + H(+) = deamido-NAD(+) + diphosphate. Its pathway is cofactor biosynthesis; NAD(+) biosynthesis; deamido-NAD(+) from nicotinate D-ribonucleotide: step 1/1. Functionally, catalyzes the reversible adenylation of nicotinate mononucleotide (NaMN) to nicotinic acid adenine dinucleotide (NaAD). This Neisseria meningitidis serogroup C (strain 053442) protein is Probable nicotinate-nucleotide adenylyltransferase.